Here is a 119-residue protein sequence, read N- to C-terminus: DNA-binding protein inhibitor ID-3 (119 aa).

Positions 28–80 (RGKGPAAEEPLSLLDDMNHCYSRLRELVPGVPRGTQLSQVEILQRVIDYILDL) constitute a bHLH domain.

Homodimer, and heterodimer with other HLH proteins. Interacts with COPS5 and COPS7A. Interacts with IFI204. Interacts with GATA4 and NKX2-5. Interacts with ANKRD2; both proteins cooperate in myoblast differentiation. Interacts with CLOCK and BMAL1. As to expression, expressed abundantly in lung, kidney and adrenal gland, but not in adult brain.

The protein localises to the nucleus. Transcriptional regulator (lacking a basic DNA binding domain) which negatively regulates the basic helix-loop-helix (bHLH) transcription factors by forming heterodimers and inhibiting their DNA binding and transcriptional activity. Implicated in regulating a variety of cellular processes, including cellular growth, senescence, differentiation, apoptosis, angiogenesis, and neoplastic transformation. Involved in myogenesis by inhibiting skeletal muscle and cardiac myocyte differentiation and promoting muscle precursor cells proliferation. Inhibits the binding of E2A-containing protein complexes to muscle creatine kinase E-box enhancer. Regulates the circadian clock by repressing the transcriptional activator activity of the CLOCK-BMAL1 heterodimer. The chain is DNA-binding protein inhibitor ID-3 (ID3) from Homo sapiens (Human).